A 464-amino-acid polypeptide reads, in one-letter code: Glutathione reductase (464 aa).

Ser-17 and Gly-18 together coordinate FAD. Ser-17 is a binding site for glutathione. Arg-24 contacts glutathione. Glu-37, Thr-45, Cys-46, and Lys-54 together coordinate FAD. Cys-46 and Cys-51 are joined by a disulfide. Tyr-103 provides a ligand contact to glutathione. Ala-119 is a binding site for FAD. NADP(+)-binding residues include Ala-186, Ile-189, Glu-192, Arg-209, Arg-215, and Gly-274. An FAD-binding site is contributed by Asp-315. Glu-321 contacts NADP(+). Thr-323 serves as a coordination point for FAD. Residue Arg-331 participates in glutathione binding. Val-354 provides a ligand contact to NADP(+). FAD is bound at residue His-453. Residue His-453 is the Proton acceptor of the active site.

The protein belongs to the class-I pyridine nucleotide-disulfide oxidoreductase family. As to quaternary structure, homodimer. It depends on FAD as a cofactor.

Its subcellular location is the cytoplasm. It localises to the mitochondrion. The enzyme catalyses 2 glutathione + NADP(+) = glutathione disulfide + NADPH + H(+). Functionally, catalyzes the reduction of glutathione disulfide (GSSG) to reduced glutathione (GSH). Constitutes the major mechanism to maintain a high GSH:GSSG ratio in the cytosol. This is Glutathione reductase (pgr1) from Schizosaccharomyces pombe (strain 972 / ATCC 24843) (Fission yeast).